The chain runs to 315 residues: Probable cell division protein WhiA (315 aa).

The segment at residues Ser277–Gln311 is a DNA-binding region (H-T-H motif).

It belongs to the WhiA family.

Involved in cell division and chromosome segregation. The polypeptide is Probable cell division protein WhiA (Lacticaseibacillus casei (strain BL23) (Lactobacillus casei)).